Here is a 546-residue protein sequence, read N- to C-terminus: CTP synthase (546 aa).

Residues 1-266 (MTTRYIFVTG…DDLVVKRFGL (266 aa)) form an amidoligase domain region. Ser14 contacts CTP. Ser14 is a UTP binding site. ATP-binding positions include 15 to 20 (SLGKGI) and Asp72. Residues Asp72 and Glu140 each coordinate Mg(2+). CTP-binding positions include 147–149 (DIE), 187–192 (KTKPTQ), and Lys223. UTP-binding positions include 187-192 (KTKPTQ) and Lys223. An ATP-binding site is contributed by 239-241 (KDV). The region spanning 291 to 542 (VIGMVGKYIE…VAAASAHQKR (252 aa)) is the Glutamine amidotransferase type-1 domain. Residue Gly352 coordinates L-glutamine. The active-site Nucleophile; for glutamine hydrolysis is Cys379. Residues 380-383 (LGMQ), Glu403, and Arg470 each bind L-glutamine. Active-site residues include His515 and Glu517.

Belongs to the CTP synthase family. In terms of assembly, homotetramer.

The enzyme catalyses UTP + L-glutamine + ATP + H2O = CTP + L-glutamate + ADP + phosphate + 2 H(+). It carries out the reaction L-glutamine + H2O = L-glutamate + NH4(+). The catalysed reaction is UTP + NH4(+) + ATP = CTP + ADP + phosphate + 2 H(+). It participates in pyrimidine metabolism; CTP biosynthesis via de novo pathway; CTP from UDP: step 2/2. Allosterically activated by GTP, when glutamine is the substrate; GTP has no effect on the reaction when ammonia is the substrate. The allosteric effector GTP functions by stabilizing the protein conformation that binds the tetrahedral intermediate(s) formed during glutamine hydrolysis. Inhibited by the product CTP, via allosteric rather than competitive inhibition. In terms of biological role, catalyzes the ATP-dependent amination of UTP to CTP with either L-glutamine or ammonia as the source of nitrogen. Regulates intracellular CTP levels through interactions with the four ribonucleotide triphosphates. This Shewanella sp. (strain ANA-3) protein is CTP synthase.